The chain runs to 255 residues: Small ribosomal subunit protein eS1 (255 aa).

Positions 1 to 18 (MAVGKNKRLSKGKKGLKK) are enriched in basic residues. The interval 1–28 (MAVGKNKRLSKGKKGLKKRTQDPFSRKD) is disordered. A2 is subject to N-acetylalanine; partial. Over residues 19–28 (RTQDPFSRKD) the composition is skewed to basic and acidic residues.

The protein belongs to the eukaryotic ribosomal protein eS1 family. Component of the small ribosomal subunit. Mature ribosomes consist of a small (40S) and a large (60S) subunit. The 40S subunit contains about 33 different proteins and 1 molecule of RNA (18S). The 60S subunit contains about 49 different proteins and 3 molecules of RNA (25S, 5.8S and 5S).

It is found in the cytoplasm. In Ajellomyces capsulatus (strain H143) (Darling's disease fungus), this protein is Small ribosomal subunit protein eS1.